The chain runs to 314 residues: MMTCASSDDNESEKDKDSESFVEVDPTGRYGRYGELLGSGAVKKVYRAFDQEEGIEVAWNQVKLRCFSDDPAMTERLYSEVRLLKNLKNSNIITLYKVWRDERNNTLNFITEICTSGNLREYRKKHRHVSMRALKKWSKQILKGLDYLHTHDPCIIHRDLNCSNIFVNGNIGQVKIGDLGLAAIVGKNHLAHSILGTPEFMAPELYEENYTEMVDIYSYGMCVLELVSLEIPYSECDSVAKIYKRVSKGLKPEALNKVNDPEAKAFIEKCIAQPRARPSAAELLCDPFFDGILDDDDEDGENNDNNGAGRIVVS.

Residues 1 to 22 are disordered; sequence MMTCASSDDNESEKDKDSESFV. The Protein kinase domain maps to 31-289; it reads GRYGELLGSG…AAELLCDPFF (259 aa). Residue 111–114 participates in ATP binding; the sequence is TEIC. Residue D178 is the Proton acceptor of the active site. The disordered stretch occupies residues 295-314; it reads DDDEDGENNDNNGAGRIVVS.

It belongs to the protein kinase superfamily. Ser/Thr protein kinase family. WNK subfamily.

It carries out the reaction L-seryl-[protein] + ATP = O-phospho-L-seryl-[protein] + ADP + H(+). The catalysed reaction is L-threonyl-[protein] + ATP = O-phospho-L-threonyl-[protein] + ADP + H(+). In terms of biological role, may regulate flowering time by modulating the photoperiod pathway. In Arabidopsis thaliana (Mouse-ear cress), this protein is Probable serine/threonine-protein kinase WNK11 (WNK11).